The chain runs to 395 residues: Chorismate synthase (395 aa).

Arginine 40 and arginine 46 together coordinate NADP(+). FMN is bound by residues 135–137 (RAS) and 256–257 (QA). Basic and acidic residues predominate over residues 272–283 (RRGSQAHDEMRP). A disordered region spans residues 272–296 (RRGSQAHDEMRPGPDGILRSTNRAG). FMN is bound by residues glycine 300, 315–319 (KPIST), and arginine 341.

This sequence belongs to the chorismate synthase family. In terms of assembly, homotetramer. FMNH2 serves as cofactor.

The enzyme catalyses 5-O-(1-carboxyvinyl)-3-phosphoshikimate = chorismate + phosphate. The protein operates within metabolic intermediate biosynthesis; chorismate biosynthesis; chorismate from D-erythrose 4-phosphate and phosphoenolpyruvate: step 7/7. Its function is as follows. Catalyzes the anti-1,4-elimination of the C-3 phosphate and the C-6 proR hydrogen from 5-enolpyruvylshikimate-3-phosphate (EPSP) to yield chorismate, which is the branch point compound that serves as the starting substrate for the three terminal pathways of aromatic amino acid biosynthesis. This reaction introduces a second double bond into the aromatic ring system. The chain is Chorismate synthase from Rhodococcus jostii (strain RHA1).